Reading from the N-terminus, the 660-residue chain is Acyl-coenzyme A oxidase acox-1.3 (660 aa).

Residues 146–149 (YAQT), 154–155 (GT), and Gly188 contribute to the FAD site. Substrate-binding positions include 282 to 285 (KIGY) and Arg292. Residues Arg317 and 337–340 (QQHR) contribute to the FAD site. The ATP site is built by His339, Ser389, His393, and Gln401. 430-431 (YE) is a binding site for substrate. Catalysis depends on Glu431, which acts as the Proton acceptor. Glu433 contributes to the FAD binding site. Residues 524–527 (RASR) and Tyr572 contribute to the ATP site. The short motif at 658-660 (AKL) is the Microbody targeting signal element.

The protein belongs to the acyl-CoA oxidase family. As to quaternary structure, forms a heterodimer with acox-1.1; the interaction may be important for the stability of acox-1.3. The cofactor is FAD.

The protein resides in the peroxisome. The catalysed reaction is asc-C7-CoA + O2 = asc-DeltaC7-CoA + H2O2. The protein operates within lipid metabolism; peroxisomal fatty acid beta-oxidation. Its activity is regulated as follows. Activated by ATP. ATP binding leads to a conformational change that promotes FAD cofactor binding and enzyme activity. ATP binding likely occurs during acox-1.3 folding and/or dimer formation. Involved in the first step of peroxisomal beta-oxidation by catalyzing the desaturation of fatty acid-derived side chains of ascaroside pheromones, which regulates development and behavior. Specifically, shortens ascarosides with a 7-carbon side chain (asc-C7). Does not catalyze the desaturation of fatty acids or hydroxylated fatty acids. Involved in the biosynthesis of asc-C6-MK (daumone 2) and asc-delta-C9 (daumone 3) but not asc-C7 (daumone 1); daumones are pheromones produced during unfavourable growth conditions which promote entry into the dauer stage. In Caenorhabditis elegans, this protein is Acyl-coenzyme A oxidase acox-1.3.